The primary structure comprises 527 residues: MASGPHPTSTAAAASASSAAPSAGGSSSGTTTTTTTTTGGILIGDRLYSEVSLTIDHSVIPEERLSPTPSMQDGLDLPSETDLRILGCELIQAAGILLRLPQVAMATGQVLFHRFFYSKSFVKHSFEIVAMACINLASKIEEAPRRIRDVINVFHHLRQLRGKRTPSPLILDQNYINTKNQVIKAERRVLKELGFCVHVKHPHKIIVMYLQVLECERNQTLVQTAWNYMNDSLRTNVFVRFQPETIACACIYLAARALQIPLPTRPHWFLLFGTTEEEIQEICIETLRLYTRKKPNYELLEKEVEKRKVALQEAKLKAKGLNLDGTPALSTLGGFSPASKPSSPREVKAEEKSPVSINVKTVKKEPEDRQQASKSPYNGVRKDSKRSRNSRSASRSRSRTRSRSRSHTPRRHYNNRRSRSGTYSSRSRSRSRSHSESPRRHHNHGSPHLKAKHTREDLKSSNRHGHKRKKSRSRSQSKTRDHSDVTKKHRHERGHHRDRRERSRSFERSHKGKHHGGSRSGHGRHRR.

The interval 1–37 is disordered; that stretch reads MASGPHPTSTAAAASASSAAPSAGGSSSGTTTTTTTT. Cyclin-like stretches follow at residues 89 to 191 and 204 to 288; these read ELIQ…RVLK and KIIV…ETLR. T326 bears the Phosphothreonine mark. A disordered region spans residues 327–527; the sequence is PALSTLGGFS…SRSGHGRHRR (201 aa). Phosphoserine is present on residues S336 and S339. Residues K340 and K348 each participate in a glycyl lysine isopeptide (Lys-Gly) (interchain with G-Cter in SUMO2) cross-link. The segment covering 343 to 353 has biased composition (basic and acidic residues); it reads SPREVKAEEKS. Phosphoserine is present on residues S353 and S356. Residues 362–371 are compositionally biased toward basic and acidic residues; sequence VKKEPEDRQQ. K363 participates in a covalent cross-link: Glycyl lysine isopeptide (Lys-Gly) (interchain with G-Cter in SUMO2). At S375 the chain carries Phosphoserine. Basic residues-rich tracts occupy residues 383–419, 439–453, 461–477, and 487–499; these read DSKR…RRSR, RRHH…KAKH, SNRH…RSQS, and KKHR…HRDR. Positions 391 to 433 are RS; sequence RSASRSRSRTRSRSRSHTPRRHYNNRRSRSGTYSSRSRSRSRS. At S446 the chain carries Phosphoserine. A compositionally biased stretch (basic and acidic residues) spans 500–509; that stretch reads RERSRSFERS. Positions 510–527 are enriched in basic residues; that stretch reads HKGKHHGGSRSGHGRHRR.

This sequence belongs to the cyclin family. Cyclin L subfamily. As to quaternary structure, interacts with POLR2A via its hyperphosphorylated C-terminal domain (CTD). Interacts with CDK11A, CDK11B, CDK12 and CDK13. May form a ternary complex with CDK11B and casein kinase II (CKII). Interacts with pre-mRNA-splicing factors, including at least SRSF1, SRSF2 AND SRSF7/SLU7. Ubiquitous with higher level in liver; expressed in striatal neurons.

It is found in the nucleus speckle. It localises to the nucleus. The protein resides in the nucleoplasm. In terms of biological role, involved in pre-mRNA splicing. Functions in association with cyclin-dependent kinases (CDKs). May play a role in the regulation of RNA polymerase II (pol II). Inhibited by the CDK-specific inhibitor CDKN1A/p21. The polypeptide is Cyclin-L1 (Ccnl1) (Rattus norvegicus (Rat)).